A 475-amino-acid polypeptide reads, in one-letter code: UDP-N-acetylmuramate--L-alanine ligase (475 aa).

117-123 (GTHGKTT) is an ATP binding site.

Belongs to the MurCDEF family.

It is found in the cytoplasm. The catalysed reaction is UDP-N-acetyl-alpha-D-muramate + L-alanine + ATP = UDP-N-acetyl-alpha-D-muramoyl-L-alanine + ADP + phosphate + H(+). It participates in cell wall biogenesis; peptidoglycan biosynthesis. Its function is as follows. Cell wall formation. The protein is UDP-N-acetylmuramate--L-alanine ligase of Chlorobaculum tepidum (strain ATCC 49652 / DSM 12025 / NBRC 103806 / TLS) (Chlorobium tepidum).